Consider the following 90-residue polypeptide: Putative membrane protein insertion efficiency factor (90 aa).

The protein belongs to the UPF0161 family.

It is found in the cell inner membrane. In terms of biological role, could be involved in insertion of integral membrane proteins into the membrane. In Thermosynechococcus vestitus (strain NIES-2133 / IAM M-273 / BP-1), this protein is Putative membrane protein insertion efficiency factor.